A 302-amino-acid polypeptide reads, in one-letter code: MDQKRLTHLRQLEAESIHIIREVAAEFSNPVMMYSIGKDSSVMLHLARKAFYPGTLPFPLLHVDTGWKFREMYEFRDRTAKAYGCELLVHKNPEGVAMGINPFVHGSAKHTDIMKTEGLKQALDKYGFDAAFGGARRDEEKSRAKERIYSFRDRFHRWDPKNQRPELWHNYNGQINKGESIRVFPLSNWTEQDIWQYIWLENIEIVPLYLAAERPVLERDGMLMMIDDDRIDLQPGEVIKKRMVRFRTLGCWPLTGAVESSAQTLPEIIEEMLVSTTSERQGRVIDRDQAGSMELKKRQGYF.

The protein belongs to the PAPS reductase family. CysD subfamily. As to quaternary structure, heterodimer composed of CysD, the smaller subunit, and CysN.

It carries out the reaction sulfate + ATP + H(+) = adenosine 5'-phosphosulfate + diphosphate. Its pathway is sulfur metabolism; hydrogen sulfide biosynthesis; sulfite from sulfate: step 1/3. With CysN forms the ATP sulfurylase (ATPS) that catalyzes the adenylation of sulfate producing adenosine 5'-phosphosulfate (APS) and diphosphate, the first enzymatic step in sulfur assimilation pathway. APS synthesis involves the formation of a high-energy phosphoric-sulfuric acid anhydride bond driven by GTP hydrolysis by CysN coupled to ATP hydrolysis by CysD. This chain is Sulfate adenylyltransferase subunit 2, found in Citrobacter koseri (strain ATCC BAA-895 / CDC 4225-83 / SGSC4696).